The following is a 118-amino-acid chain: uncharacterized protein (118 aa).

A run of 4 helical transmembrane segments spans residues 5–20 (IVFYLILLCLFISVVM), 25–42 (VIRTIANVICFIFVLLYF), 53–73 (ALAILSICFLFLVGICAFIIL), and 83–103 (LFFTGLETIAGILLIIVSLSI).

It localises to the cell membrane. This is an uncharacterized protein from Bacillus subtilis (strain 168).